A 398-amino-acid polypeptide reads, in one-letter code: MAESAFSERIVQNLLDTDFYKLTMMQAVLHNYPNAEVEWEFRCRNQEDLRLYLPAIREQLEYLAGLAISDEQLAFLERIPFLAPDFIRFLGLFRFNPRYVQTGIENDEFFLRLKGPWLHVILFEVPLLAMISEVRNRARYPAATVEQARERLQEKFDWLRREASAEELAGFKMADFGTRRRFSYRVHEAVVSGLKEDFPGCFVGTSNVHLARKLDLKPLGTMAHEWLMAHQQLGPRLIDSQSAALDCWVREYRGLLGIALTDCITTDAFLRDFDLYFAKLFDGLRHDSGDPLLWAEKTIAHYLKLGIDPLTKTLVFSDGLDLPRALKIYRALQGRINVSFGIGTHFTCDLPGVEPMNIVVKMSACNGHPVAKISDTPGKAQCRDPDFIHYLKHVFQVA.

Phosphohistidine; by autocatalysis is present on histidine 224.

This sequence belongs to the NAPRTase family. Transiently phosphorylated on a His residue during the reaction cycle. Phosphorylation strongly increases the affinity for substrates and increases the rate of nicotinate D-ribonucleotide production. Dephosphorylation regenerates the low-affinity form of the enzyme, leading to product release.

It carries out the reaction nicotinate + 5-phospho-alpha-D-ribose 1-diphosphate + ATP + H2O = nicotinate beta-D-ribonucleotide + ADP + phosphate + diphosphate. Its pathway is cofactor biosynthesis; NAD(+) biosynthesis; nicotinate D-ribonucleotide from nicotinate: step 1/1. Catalyzes the synthesis of beta-nicotinate D-ribonucleotide from nicotinate and 5-phospho-D-ribose 1-phosphate at the expense of ATP. This is Nicotinate phosphoribosyltransferase 2 from Pseudomonas aeruginosa (strain ATCC 15692 / DSM 22644 / CIP 104116 / JCM 14847 / LMG 12228 / 1C / PRS 101 / PAO1).